The following is a 294-amino-acid chain: Formamidopyrimidine-DNA glycosylase (294 aa).

The active-site Schiff-base intermediate with DNA is Pro2. Residue Glu3 is the Proton donor of the active site. Lys61 serves as the catalytic Proton donor; for beta-elimination activity. DNA contacts are provided by His104, Arg123, and Lys169. The segment at 255–289 (AVYGRQDEPCRRCGAPIVREKFMNRSSYSCPRCQP) adopts an FPG-type zinc-finger fold. Arg279 serves as the catalytic Proton donor; for delta-elimination activity.

Belongs to the FPG family. As to quaternary structure, monomer. The cofactor is Zn(2+).

It catalyses the reaction Hydrolysis of DNA containing ring-opened 7-methylguanine residues, releasing 2,6-diamino-4-hydroxy-5-(N-methyl)formamidopyrimidine.. It carries out the reaction 2'-deoxyribonucleotide-(2'-deoxyribose 5'-phosphate)-2'-deoxyribonucleotide-DNA = a 3'-end 2'-deoxyribonucleotide-(2,3-dehydro-2,3-deoxyribose 5'-phosphate)-DNA + a 5'-end 5'-phospho-2'-deoxyribonucleoside-DNA + H(+). Involved in base excision repair of DNA damaged by oxidation or by mutagenic agents. Acts as a DNA glycosylase that recognizes and removes damaged bases. Has a preference for oxidized purines, such as 7,8-dihydro-8-oxoguanine (8-oxoG). Has AP (apurinic/apyrimidinic) lyase activity and introduces nicks in the DNA strand. Cleaves the DNA backbone by beta-delta elimination to generate a single-strand break at the site of the removed base with both 3'- and 5'-phosphates. This is Formamidopyrimidine-DNA glycosylase from Nocardia farcinica (strain IFM 10152).